Consider the following 60-residue polypeptide: Large ribosomal subunit protein uL30 (60 aa).

This sequence belongs to the universal ribosomal protein uL30 family. In terms of assembly, part of the 50S ribosomal subunit.

The chain is Large ribosomal subunit protein uL30 from Leptothrix cholodnii (strain ATCC 51168 / LMG 8142 / SP-6) (Leptothrix discophora (strain SP-6)).